The following is a 385-amino-acid chain: Lipoyl synthase, mitochondrial (385 aa).

The disordered stretch occupies residues 18–40; the sequence is TKAKNRTFSSSTVESSTKQPPQF. The [4Fe-4S] cluster site is built by cysteine 113, cysteine 118, cysteine 124, cysteine 144, cysteine 148, cysteine 151, and serine 360. A Radical SAM core domain is found at 129-349; sequence ETGTATATIM…KTLGMEMGFR (221 aa).

The protein belongs to the radical SAM superfamily. Lipoyl synthase family. Requires [4Fe-4S] cluster as cofactor.

The protein localises to the mitochondrion. It catalyses the reaction [[Fe-S] cluster scaffold protein carrying a second [4Fe-4S](2+) cluster] + N(6)-octanoyl-L-lysyl-[protein] + 2 oxidized [2Fe-2S]-[ferredoxin] + 2 S-adenosyl-L-methionine + 4 H(+) = [[Fe-S] cluster scaffold protein] + N(6)-[(R)-dihydrolipoyl]-L-lysyl-[protein] + 4 Fe(3+) + 2 hydrogen sulfide + 2 5'-deoxyadenosine + 2 L-methionine + 2 reduced [2Fe-2S]-[ferredoxin]. The protein operates within protein modification; protein lipoylation via endogenous pathway; protein N(6)-(lipoyl)lysine from octanoyl-[acyl-carrier-protein]: step 2/2. Its function is as follows. Catalyzes the radical-mediated insertion of two sulfur atoms into the C-6 and C-8 positions of the octanoyl moiety bound to the lipoyl domains of lipoate-dependent enzymes, thereby converting the octanoylated domains into lipoylated derivatives. The chain is Lipoyl synthase, mitochondrial from Populus trichocarpa (Western balsam poplar).